A 413-amino-acid chain; its full sequence is Multifunctional CCA protein (413 aa).

Residues Gly-8 and Arg-11 each coordinate ATP. Residues Gly-8 and Arg-11 each contribute to the CTP site. Residues Asp-21 and Asp-23 each contribute to the Mg(2+) site. ATP-binding residues include Arg-91, Arg-137, and Arg-140. CTP is bound by residues Arg-91, Arg-137, and Arg-140. An HD domain is found at 228 to 329 (TGIHTLMVLE…VKIFDKADLW (102 aa)).

The protein belongs to the tRNA nucleotidyltransferase/poly(A) polymerase family. Bacterial CCA-adding enzyme type 1 subfamily. Monomer. Can also form homodimers and oligomers. The cofactor is Mg(2+). Requires Ni(2+) as cofactor.

It catalyses the reaction a tRNA precursor + 2 CTP + ATP = a tRNA with a 3' CCA end + 3 diphosphate. The enzyme catalyses a tRNA with a 3' CCA end + 2 CTP + ATP = a tRNA with a 3' CCACCA end + 3 diphosphate. Catalyzes the addition and repair of the essential 3'-terminal CCA sequence in tRNAs without using a nucleic acid template. Adds these three nucleotides in the order of C, C, and A to the tRNA nucleotide-73, using CTP and ATP as substrates and producing inorganic pyrophosphate. tRNA 3'-terminal CCA addition is required both for tRNA processing and repair. Also involved in tRNA surveillance by mediating tandem CCA addition to generate a CCACCA at the 3' terminus of unstable tRNAs. While stable tRNAs receive only 3'-terminal CCA, unstable tRNAs are marked with CCACCA and rapidly degraded. This Shewanella sediminis (strain HAW-EB3) protein is Multifunctional CCA protein.